The sequence spans 193 residues: Glycerol-3-phosphate acyltransferase (193 aa).

The next 5 membrane-spanning stretches (helical) occupy residues 4 to 24 (LALI…AVLI), 56 to 76 (GLVL…GYFL), 80 to 100 (PLLL…PLFF), 116 to 136 (APIG…IVLI), and 152 to 174 (PLFT…CLIV).

Belongs to the PlsY family. As to quaternary structure, probably interacts with PlsX.

It localises to the cell inner membrane. The catalysed reaction is an acyl phosphate + sn-glycerol 3-phosphate = a 1-acyl-sn-glycero-3-phosphate + phosphate. The protein operates within lipid metabolism; phospholipid metabolism. Catalyzes the transfer of an acyl group from acyl-phosphate (acyl-PO(4)) to glycerol-3-phosphate (G3P) to form lysophosphatidic acid (LPA). This enzyme utilizes acyl-phosphate as fatty acyl donor, but not acyl-CoA or acyl-ACP. This is Glycerol-3-phosphate acyltransferase from Aliivibrio salmonicida (strain LFI1238) (Vibrio salmonicida (strain LFI1238)).